Consider the following 559-residue polypeptide: Phosphatase and actin regulator 3 (559 aa).

A disordered region spans residues 1–65 (MAASEDGSGC…GIRTPPVRRN (65 aa)). The segment covering 15–24 (GRSQSDPSVL) has biased composition (polar residues). Residues 25-35 (TDSSATSSADA) show a composition bias toward low complexity. At Thr-70 the chain carries Phosphothreonine. The tract at residues 82–342 (KKKNEKLKQT…VERGKEREEA (261 aa)) is disordered. The stretch at 93–118 (SALEKKMAGRQGREELIKKGLLEMME) is one RPEL 1 repeat. The span at 95–113 (LEKKMAGRQGREELIKKGL) shows a compositional bias: basic and acidic residues. Positions 134–151 (SVQSEPPTPKSETLTSED) are enriched in polar residues. Positions 229 to 240 (PSPPLLPTPPPK) are enriched in pro residues. Ser-230 carries the post-translational modification Phosphoserine. Thr-236 is subject to Phosphothreonine. Polar residues-rich tracts occupy residues 248 to 262 (NVTGQATLFQASSMK) and 270 to 281 (GQLSTPTGSPHL). Residues 293 to 342 (VIEELHRALATKHRQDSFQGRESKGSPKKRLDVRLSRTSSVERGKEREEA) show a composition bias toward basic and acidic residues. Positions 346 to 369 (DGALENKRTAAKESEENKENLIIN) form a coiled coil. RPEL repeat units follow at residues 401–426 (ELLAVKLRNRPSKQELEDRNIFPRRT), 439–464 (MKLSKRLSQRPAVEELERRNILKQRN), and 477–502 (QRLTRKLNQRPTVDELRDRKILIRFS). The segment at 438–518 (EMKLSKRLSQ…KAQDYDRRAD (81 aa)) is required for PP1CA binding and inhibition of PP1 activity. The stretch at 450-486 (AVEELERRNILKQRNDQTEQEERREIKQRLTRKLNQR) forms a coiled coil.

The protein belongs to the phosphatase and actin regulator family. Binds actin and PPP1CA; thus inhibiting the protein phosphatase 1 (PP1) activity. As to expression, abundantly expressed in brain. Also found in several tumors such as lung carcinomas, nervous tumors and HL-60 leukemia cells. Isoform 3 is the major form in U-937, GOTO and HL-60 leukemia cells.

It is found in the nucleus matrix. This is Phosphatase and actin regulator 3 (PHACTR3) from Homo sapiens (Human).